A 240-amino-acid chain; its full sequence is Sugar fermentation stimulation protein homolog (240 aa).

It belongs to the SfsA family.

The sequence is that of Sugar fermentation stimulation protein homolog from Saccharolobus solfataricus (strain ATCC 35092 / DSM 1617 / JCM 11322 / P2) (Sulfolobus solfataricus).